The following is a 64-amino-acid chain: Small hydrophobic protein (64 aa).

The Intravirion portion of the chain corresponds to 1–20 (MENTSITIEFSSKFWPYFTL). Residues 6-15 (ITIEFSSKFW) form an interaction with host BCAP31 region. The helical; Signal-anchor for type II membrane protein transmembrane segment at 21–44 (IHMITTIISLLIIISIMIAILNKL) threads the bilayer. The interaction with small-molecule inhibitor stretch occupies residues 38–43 (IAILNK). The Virion surface portion of the chain corresponds to 45-64 (CEYNVFHNKTFELPRARVNT). Residue Asn-52 is glycosylated (N-linked (GlcNAc...) asparagine; by host).

The protein belongs to the orthopneumovirus small hydrophobic protein family. In terms of assembly, homopentamer forming a funnel-like pore. Interacts with glycoprotein G; this interaction occurs on the surface of virion particles and infected cells. Interacts with host BCAP31 (via C-terminus); this interaction is direct. Four species of SH have been detected in infected cell cytoplasm: a 7.5 kDa non-glycosylated form (SH0), a 13-15 kDa form that contains one or two N-linked carbohydrate side chains of the high-mannose type (SHg), a 21-30 kDa polylactosaminoglycan-modified form of the protein (SHp), and the isoform generated by alternative translational initiation. Of these different forms, SH0 is by far the most abundant protein detected during virus infection. In terms of processing, tyrosine phosphorylated.

The protein resides in the virion membrane. The protein localises to the host cell membrane. It is found in the host Golgi apparatus membrane. It localises to the host endoplasmic reticulum membrane. With respect to regulation, channel activity is inhibited by copper. Also inhibited by small-molecule pyronin B. Its function is as follows. Viroporin that forms a homopentameric ion channel displaying low ion selectivity. May play a role in virus morphogenesis and pathogenicity at various stages of the viral life cycle. Accumulates at the membrane of the Golgi apparatus in infected cells and may facilitate virus release by modifying the secretory pathway. May enhance host membrane permeability and disrupt cellular ion homeostasis, which can be sensed as damage-associated molecular patterns/danger signals, triggering NLRP3 inflammasome activation and inflammatory immune response. Also inhibits host TNFA-mediated signaling pathway and may delay apoptosis, allowing time for the virus to replicate. The protein is Small hydrophobic protein of Homo sapiens (Human).